The primary structure comprises 218 residues: Large ribosomal subunit protein uL1 (218 aa).

It belongs to the universal ribosomal protein uL1 family. As to quaternary structure, part of the 50S ribosomal subunit.

Probably involved in E site tRNA release. Binds directly to 23S rRNA. Functionally, protein L1 is also a translational repressor protein, it controls the translation of its operon by binding to its mRNA. This Saccharolobus solfataricus (strain ATCC 35092 / DSM 1617 / JCM 11322 / P2) (Sulfolobus solfataricus) protein is Large ribosomal subunit protein uL1.